Here is a 421-residue protein sequence, read N- to C-terminus: Monopolin complex subunit mde4 (421 aa).

2 disordered regions span residues 122-158 (QKSN…NKDE) and 224-316 (DRKL…MTVS). The segment covering 133–149 (VSQNRLRGSLDTVSSPS) has biased composition (polar residues). The segment covering 224-238 (DRKLRMQKKSTERKS) has biased composition (basic and acidic residues). Over residues 262–287 (RQPNATSGSPLSVTPFLQKTSTSIGL) the composition is skewed to polar residues. Low complexity predominate over residues 288-304 (SSSPPQSSPSAQSSQPF).

Component of a monopolin-like complex composed of pcs1 and mde4. The complex associates with the kinetochore.

Its subcellular location is the nucleus. The protein resides in the chromosome. The protein localises to the centromere. Functionally, the monopolin-like pcs1/mde4 complex is essential for accurate chromosome segregation during mitosis and meiosis II. May clamp together microtubule binding sites on the same kinetochore, preventing merotelic attachment of microtubules. The protein is Monopolin complex subunit mde4 (mde4) of Schizosaccharomyces pombe (strain 972 / ATCC 24843) (Fission yeast).